The following is a 309-amino-acid chain: Uracil phosphoribosyltransferase homolog (309 aa).

The segment at 1 to 41 (MATELQCPDSMPCHNQQVNSASTPSPEQLRPGDPILDHAGG) is disordered. Positions 13–26 (CHNQQVNSASTPSP) are enriched in polar residues. Phosphoserine is present on S25. Residues R133, R142, and 176 to 179 (EKGN) each bind GTP. R186 contributes to the 5-phospho-alpha-D-ribose 1-diphosphate binding site. Residues R203 and R232 each contribute to the GTP site. A 5-phospho-alpha-D-ribose 1-diphosphate-binding site is contributed by 238–246 (YPILSTGNT). 299–301 (THF) is a binding site for uracil.

Belongs to the UPRTase family.

Its subcellular location is the cytoplasm. The protein localises to the nucleus. The protein is Uracil phosphoribosyltransferase homolog (UPRT) of Macaca fascicularis (Crab-eating macaque).